We begin with the raw amino-acid sequence, 1588 residues long: Pentafunctional AROM polypeptide (1588 aa).

A 3-dehydroquinate synthase region spans residues 1–392 (MVQLAKVPIL…YGDSAQFVSD (392 aa)). NAD(+) contacts are provided by residues 43 to 45 (DTN), 78 to 81 (ETSK), 109 to 111 (GGV), and Asp-114. Arg-125 is a 7-phospho-2-dehydro-3-deoxy-D-arabino-heptonate binding site. Position 134-135 (134-135 (TS)) interacts with NAD(+). 7-phospho-2-dehydro-3-deoxy-D-arabino-heptonate contacts are provided by Asp-141 and Lys-147. Position 156 (Lys-156) interacts with NAD(+). Residue Asn-157 participates in 7-phospho-2-dehydro-3-deoxy-D-arabino-heptonate binding. Residues 174–177 (WLET) and Asn-185 each bind NAD(+). Position 189 (Glu-189) interacts with Zn(2+). Residues 189–192 (EVIK) and Lys-258 contribute to the 7-phospho-2-dehydro-3-deoxy-D-arabino-heptonate site. The active-site Proton acceptor; for 3-dehydroquinate synthase activity is the Glu-268. Residues 272–276 (RNLLN) and His-279 contribute to the 7-phospho-2-dehydro-3-deoxy-D-arabino-heptonate site. Position 279 (His-279) interacts with Zn(2+). His-283 serves as the catalytic Proton acceptor; for 3-dehydroquinate synthase activity. Residues His-295 and Lys-364 each contribute to the 7-phospho-2-dehydro-3-deoxy-D-arabino-heptonate site. His-295 contributes to the Zn(2+) binding site. The segment at 405 to 871 (VYPFKDIPAD…WDVLHSELGA (467 aa)) is EPSP synthase. The active-site For EPSP synthase activity is the Cys-853. A shikimate kinase region spans residues 890 to 1080 (SVVIIGMRAA…IPSGRSAFVC (191 aa)). Residue 895–902 (GMRAAGKT) participates in ATP binding. Residues 1081–1293 (LTFDDLTEQT…AAPGQLTVAQ (213 aa)) form a 3-dehydroquinase region. Residue His-1198 is the Proton acceptor; for 3-dehydroquinate dehydratase activity of the active site. The active-site Schiff-base intermediate with substrate; for 3-dehydroquinate dehydratase activity is Lys-1227. The interval 1306-1588 (PKELFVVGKP…KAIFDAVTKE (283 aa)) is shikimate dehydrogenase.

This sequence in the N-terminal section; belongs to the sugar phosphate cyclases superfamily. Dehydroquinate synthase family. It in the 2nd section; belongs to the EPSP synthase family. In the 3rd section; belongs to the shikimate kinase family. The protein in the 4th section; belongs to the type-I 3-dehydroquinase family. This sequence in the C-terminal section; belongs to the shikimate dehydrogenase family. As to quaternary structure, homodimer. The cofactor is Zn(2+).

It localises to the cytoplasm. It carries out the reaction 7-phospho-2-dehydro-3-deoxy-D-arabino-heptonate = 3-dehydroquinate + phosphate. The enzyme catalyses 3-dehydroquinate = 3-dehydroshikimate + H2O. The catalysed reaction is shikimate + NADP(+) = 3-dehydroshikimate + NADPH + H(+). It catalyses the reaction shikimate + ATP = 3-phosphoshikimate + ADP + H(+). It carries out the reaction 3-phosphoshikimate + phosphoenolpyruvate = 5-O-(1-carboxyvinyl)-3-phosphoshikimate + phosphate. It participates in metabolic intermediate biosynthesis; chorismate biosynthesis; chorismate from D-erythrose 4-phosphate and phosphoenolpyruvate: step 2/7. The protein operates within metabolic intermediate biosynthesis; chorismate biosynthesis; chorismate from D-erythrose 4-phosphate and phosphoenolpyruvate: step 3/7. It functions in the pathway metabolic intermediate biosynthesis; chorismate biosynthesis; chorismate from D-erythrose 4-phosphate and phosphoenolpyruvate: step 4/7. Its pathway is metabolic intermediate biosynthesis; chorismate biosynthesis; chorismate from D-erythrose 4-phosphate and phosphoenolpyruvate: step 5/7. It participates in metabolic intermediate biosynthesis; chorismate biosynthesis; chorismate from D-erythrose 4-phosphate and phosphoenolpyruvate: step 6/7. In terms of biological role, the AROM polypeptide catalyzes 5 consecutive enzymatic reactions in prechorismate polyaromatic amino acid biosynthesis. This Saccharomyces cerevisiae (strain RM11-1a) (Baker's yeast) protein is Pentafunctional AROM polypeptide.